The primary structure comprises 350 residues: ATPase GET3 (350 aa).

Position 26–33 (26–33 (KGGVGKTT)) interacts with ATP. Residue Asp-57 is part of the active site. Glu-243 and Asn-270 together coordinate ATP. Cys-282 and Cys-285 together coordinate Zn(2+).

The protein belongs to the arsA ATPase family. Homodimer. Component of the Golgi to ER traffic (GET) complex, which is composed of GET1, GET2 and GET3. Within the complex, GET1 and GET2 form a heterotetramer which is stabilized by phosphatidylinositol binding and which binds to the GET3 homodimer. Interacts with the chloride channel protein GEF1.

The protein resides in the cytoplasm. It localises to the endoplasmic reticulum. It is found in the golgi apparatus. Its function is as follows. ATPase required for the post-translational delivery of tail-anchored (TA) proteins to the endoplasmic reticulum. Recognizes and selectively binds the transmembrane domain of TA proteins in the cytosol. This complex then targets to the endoplasmic reticulum by membrane-bound receptors GET1 and GET2, where the tail-anchored protein is released for insertion. This process is regulated by ATP binding and hydrolysis. ATP binding drives the homodimer towards the closed dimer state, facilitating recognition of newly synthesized TA membrane proteins. ATP hydrolysis is required for insertion. Subsequently, the homodimer reverts towards the open dimer state, lowering its affinity for the GET1-GET2 receptor, and returning it to the cytosol to initiate a new round of targeting. Cooperates with the HDEL receptor ERD2 to mediate the ATP-dependent retrieval of resident ER proteins that contain a C-terminal H-D-E-L retention signal from the Golgi to the ER. Involved in low-level resistance to the oxyanions arsenite and arsenate, and in heat tolerance. In Candida albicans (strain SC5314 / ATCC MYA-2876) (Yeast), this protein is ATPase GET3.